The primary structure comprises 129 residues: Large ribosomal subunit protein uL22 (129 aa).

It belongs to the universal ribosomal protein uL22 family. Part of the 50S ribosomal subunit.

In terms of biological role, this protein binds specifically to 23S rRNA; its binding is stimulated by other ribosomal proteins, e.g. L4, L17, and L20. It is important during the early stages of 50S assembly. It makes multiple contacts with different domains of the 23S rRNA in the assembled 50S subunit and ribosome. Functionally, the globular domain of the protein is located near the polypeptide exit tunnel on the outside of the subunit, while an extended beta-hairpin is found that lines the wall of the exit tunnel in the center of the 70S ribosome. This chain is Large ribosomal subunit protein uL22, found in Rhizobium etli (strain ATCC 51251 / DSM 11541 / JCM 21823 / NBRC 15573 / CFN 42).